The sequence spans 318 residues: Xanthocillin biosynthesis cluster transcription factor xanC (318 aa).

The segment covering 1 to 27 has biased composition (basic and acidic residues); sequence MHSQTTKDEQSKDDSSNEKQDAIERRR. The disordered stretch occupies residues 1–39; the sequence is MHSQTTKDEQSKDDSSNEKQDAIERRRLQNRLSQRNHRR. The bZIP domain occupies 20–52; it reads QDAIERRRLQNRLSQRNHRRKIRDRIAKLQERV. The interval 25-40 is basic motif; sequence RRRLQNRLSQRNHRRK. The tract at residues 41-48 is leucine-zipper; that stretch reads IRDRIAKL. 3 disordered regions span residues 71 to 107, 123 to 171, and 269 to 318; these read PPAA…QRNV, PSSS…FSLD, and GRHC…SMML. Low complexity-rich tracts occupy residues 123–139 and 147–171; these read PSSS…PFDL and STNS…FSLD. A compositionally biased stretch (polar residues) spans 293–318; it reads APSSTPFCPLHPSQSSSLDNYQSMML.

It belongs to the bZIP family.

The protein localises to the nucleus. Functionally, transcription regulator that specifically up-regulates the gene cluster that mediates the biosynthesis of the isocyanide xanthocillin and its derivatives. In Aspergillus fumigatus (strain ATCC MYA-4609 / CBS 101355 / FGSC A1100 / Af293) (Neosartorya fumigata), this protein is Xanthocillin biosynthesis cluster transcription factor xanC.